The sequence spans 171 residues: Transcription factor E (171 aa).

Positions 5-91 constitute an HTH TFE/IIEalpha-type domain; the sequence is DNKAVRGYIQ…LWKLDLDNSV (87 aa).

The protein belongs to the TFE family. As to quaternary structure, monomer. Interaction with RNA polymerase subunits RpoF and RpoE is necessary for Tfe stimulatory transcription activity. Able to interact with Tbp and RNA polymerase in the absence of DNA promoter. Interacts both with the preinitiation and elongation complexes.

Functionally, transcription factor that plays a role in the activation of archaeal genes transcribed by RNA polymerase. Facilitates transcription initiation by enhancing TATA-box recognition by TATA-box-binding protein (Tbp), and transcription factor B (Tfb) and RNA polymerase recruitment. Not absolutely required for transcription in vitro, but particularly important in cases where Tbp or Tfb function is not optimal. It dynamically alters the nucleic acid-binding properties of RNA polymerases by stabilizing the initiation complex and destabilizing elongation complexes. Seems to translocate with the RNA polymerase following initiation and acts by binding to the non template strand of the transcription bubble in elongation complexes. In Methanocella arvoryzae (strain DSM 22066 / NBRC 105507 / MRE50), this protein is Transcription factor E.